A 501-amino-acid chain; its full sequence is Putative glycogen synthase kinase-3 homolog (501 aa).

One can recognise a Protein kinase domain in the interval 33–317; the sequence is YTDAKVVGNG…PLMGCAHPFF (285 aa). Residues 39 to 47 and K62 each bind ATP; that span reads VGNGSFGVV. D158 functions as the Proton acceptor in the catalytic mechanism. Y193 is modified (phosphotyrosine). 2 disordered regions span residues 355 to 427 and 446 to 501; these read LLPR…HVAV and SYAV…EDEN. Basic and acidic residues predominate over residues 381 to 390; it reads ESPRKTEDSQ. 2 stretches are compositionally biased toward acidic residues: residues 451–471 and 482–501; these read EDAE…DYDD and DDMD…EDEN.

This sequence belongs to the protein kinase superfamily. CMGC Ser/Thr protein kinase family. GSK-3 subfamily. In terms of processing, phosphorylation on Tyr-193 is necessary for the activity.

The catalysed reaction is L-seryl-[tau protein] + ATP = O-phospho-L-seryl-[tau protein] + ADP + H(+). The enzyme catalyses L-threonyl-[tau protein] + ATP = O-phospho-L-threonyl-[tau protein] + ADP + H(+). The sequence is that of Putative glycogen synthase kinase-3 homolog (gskt) from Drosophila melanogaster (Fruit fly).